The following is a 319-amino-acid chain: Ribonucleoside-diphosphate reductase 2 subunit beta (319 aa).

Fe cation is bound by residues aspartate 67, glutamate 98, and histidine 101. Tyrosine 105 is a catalytic residue. Glutamate 158, glutamate 192, and histidine 195 together coordinate Fe cation.

Belongs to the ribonucleoside diphosphate reductase small chain family. As to quaternary structure, tetramer of two alpha and two beta subunits. Fe cation is required as a cofactor.

It catalyses the reaction a 2'-deoxyribonucleoside 5'-diphosphate + [thioredoxin]-disulfide + H2O = a ribonucleoside 5'-diphosphate + [thioredoxin]-dithiol. In terms of biological role, provides the precursors necessary for DNA synthesis. Catalyzes the biosynthesis of deoxyribonucleotides from the corresponding ribonucleotides. R2F contains the tyrosyl radical required for catalysis. This chain is Ribonucleoside-diphosphate reductase 2 subunit beta (nrdF), found in Escherichia coli (strain K12).